The chain runs to 160 residues: Troponin C, skeletal muscle (160 aa).

4 consecutive EF-hand domains span residues 15 to 50 (EMIA…LGQN), 51 to 86 (PTRE…QLKE), 91 to 126 (KSEE…SGEP), and 127 to 160 (VSEE…ENIQ). Ca(2+)-binding residues include aspartate 28, aspartate 30, aspartate 34, glutamate 39, aspartate 64, aspartate 66, serine 68, threonine 70, glutamate 75, aspartate 104, asparagine 106, aspartate 108, glutamate 115, aspartate 140, asparagine 142, aspartate 144, lysine 146, and glutamate 151.

The protein belongs to the troponin C family.

In terms of biological role, troponin is the central regulatory protein of striated muscle contraction. Tn consists of three components: Tn-I which is the inhibitor of actomyosin ATPase, Tn-T which contains the binding EF-hand for tropomyosin and Tn-C. The binding of calcium to Tn-C abolishes the inhibitory action of Tn on actin filaments. This is Troponin C, skeletal muscle from Anguilla anguilla (European freshwater eel).